Reading from the N-terminus, the 437-residue chain is UDP-N-acetylmuramate--L-alanine ligase (437 aa).

An ATP-binding site is contributed by 108–114; that stretch reads GAHGKTS.

Belongs to the MurCDEF family.

It localises to the cytoplasm. It catalyses the reaction UDP-N-acetyl-alpha-D-muramate + L-alanine + ATP = UDP-N-acetyl-alpha-D-muramoyl-L-alanine + ADP + phosphate + H(+). Its pathway is cell wall biogenesis; peptidoglycan biosynthesis. In terms of biological role, cell wall formation. This is UDP-N-acetylmuramate--L-alanine ligase from Staphylococcus carnosus (strain TM300).